We begin with the raw amino-acid sequence, 242 residues long: Mediator of RNA polymerase II transcription subunit 19-A (242 aa).

A compositionally biased stretch (polar residues) spans 1 to 15 (MTEIFSTLFGQNDAQ). Disordered regions lie at residues 1-33 (MTEI…PPPS) and 171-242 (PPKK…NSLR). Over residues 171–184 (PPKKKSKHKHRHHH) the composition is skewed to basic residues. The segment covering 193–210 (TRTDPTKKKKKKDNEPER) has biased composition (basic and acidic residues). Basic residues predominate over residues 211–223 (RKKKKDKKKKKNR). A compositionally biased stretch (polar residues) spans 232-242 (TGSQPNSNSLR).

The protein belongs to the Mediator complex subunit 19 family. As to quaternary structure, component of the Mediator complex.

The protein localises to the nucleus. Functionally, component of the Mediator complex, a coactivator involved in the regulated transcription of nearly all RNA polymerase II-dependent genes. Mediator functions as a bridge to convey information from gene-specific regulatory proteins to the basal RNA polymerase II transcription machinery. Mediator is recruited to promoters by direct interactions with regulatory proteins and serves as a scaffold for the assembly of a functional preinitiation complex with RNA polymerase II and the general transcription factors. This is Mediator of RNA polymerase II transcription subunit 19-A (med19a) from Danio rerio (Zebrafish).